The sequence spans 228 residues: uncharacterized protein (228 aa).

Transmembrane regions (helical) follow at residues 14 to 34, 42 to 62, 130 to 150, 156 to 176, and 192 to 212; these read HTISILLGYLLMGMTFGMLLV, VALFMSLFIYAGAVQFVAITL, FIFSISLLNHSYWIFGSLVGS, FSFDTQGMEFVMTAIFIVLFM, and IVIAVVCLALFGTEYFLLIAL.

The protein belongs to the AzlC family.

The protein localises to the cell membrane. This is an uncharacterized protein from Helicobacter pylori (strain ATCC 700392 / 26695) (Campylobacter pylori).